A 146-amino-acid chain; its full sequence is MDHPPLQVKVVSADREVWKGESVNIIVRTTEGDIGLLPGHEAFLAALAPCAAQIITTDGNREVIACDGGFVALDNDGQVSIITQYATRSEEISVDQARRDRDSLRKKLNEHERSEQDPEVVQDLTHRLHLAQAQIAAARLAGKQRS.

Residues 92-116 (ISVDQARRDRDSLRKKLNEHERSEQ) are compositionally biased toward basic and acidic residues. Positions 92 to 120 (ISVDQARRDRDSLRKKLNEHERSEQDPEV) are disordered.

Belongs to the ATPase epsilon chain family. In terms of assembly, F-type ATPases have 2 components, CF(1) - the catalytic core - and CF(0) - the membrane proton channel. CF(1) has five subunits: alpha(3), beta(3), gamma(1), delta(1), epsilon(1). CF(0) has three main subunits: a, b and c.

Its subcellular location is the cell membrane. Its function is as follows. Produces ATP from ADP in the presence of a proton gradient across the membrane. This Cutibacterium acnes (strain DSM 16379 / KPA171202) (Propionibacterium acnes) protein is ATP synthase epsilon chain.